The following is a 267-amino-acid chain: Undecaprenyl-diphosphatase (267 aa).

Helical transmembrane passes span 39-59, 87-107, 112-132, 145-165, 183-203, 216-236, and 244-264; these read PGLAFDVALHFGTLLALIWYF, VLYLIAATIPGGIGGLLLNDL, FRSPVVIATSLIVMGILLWAV, VTLRDAIIVGCAQVLALVPGV, PSVARFSFLMSMPITLAAVIV, LPLLAGVAAAAVSSWFAISVL, and SFGVFAVYRVLLGIVVFATLA.

The protein belongs to the UppP family.

The protein resides in the cell inner membrane. The enzyme catalyses di-trans,octa-cis-undecaprenyl diphosphate + H2O = di-trans,octa-cis-undecaprenyl phosphate + phosphate + H(+). Its function is as follows. Catalyzes the dephosphorylation of undecaprenyl diphosphate (UPP). Confers resistance to bacitracin. This chain is Undecaprenyl-diphosphatase, found in Gemmatimonas aurantiaca (strain DSM 14586 / JCM 11422 / NBRC 100505 / T-27).